The sequence spans 265 residues: Bidirectional sugar transporter NEC1 (265 aa).

Residues 1–8 are Extracellular-facing; it reads MAQLRADD. The chain crosses the membrane as a helical span at residues 9-29; it reads LSFIFGLLGNIVSFMVFLAPV. The 87-residue stretch at 11 to 97 folds into the MtN3/slv 1 domain; it reads FIFGLLGNIV…SLFLFYAPRK (87 aa). Topologically, residues 30–44 are cytoplasmic; sequence PTFYKIYKRKSSEGY. The helical transmembrane segment at 45–65 threads the bilayer; it reads QAIPYMVALFSAGLLLYYAYL. At 66–71 the chain is on the extracellular side; the sequence is RKNAYL. A helical transmembrane segment spans residues 72–92; sequence IVSINGFGCAIELTYISLFLF. Residues 93–103 lie on the Cytoplasmic side of the membrane; it reads YAPRKSKIFTG. A helical membrane pass occupies residues 104–124; the sequence is WLMLLELGALGMVMPITYLLA. At 125 to 130 the chain is on the extracellular side; the sequence is EGSHRV. Residues 131–151 form a helical membrane-spanning segment; the sequence is MIVGWICAAINVAVFAAPLSI. The 85-residue stretch at 132-216 folds into the MtN3/slv 2 domain; sequence IVGWICAAIN…LLYFVYKDSK (85 aa). Topologically, residues 152 to 164 are cytoplasmic; it reads MRQVIKTKSVEFM. Residues 165–185 traverse the membrane as a helical segment; it reads PFTLSLFLTLCATMWFFYGFF. The Extracellular portion of the chain corresponds to 186–190; that stretch reads KKDFY. A helical membrane pass occupies residues 191–211; sequence IAFPNILGFLFGIVQMLLYFV. Topologically, residues 212-265 are cytoplasmic; sequence YKDSKRIDDEKSDPVREATKSKEGVEIIINIEDDNSDNALQSMEKDFSRLRTSK.

Belongs to the SWEET sugar transporter family. As to quaternary structure, forms homooligomers and/or heterooligomers. As to expression, highly expressed in nectary tissue and weakly in the stamen, especially in stomium cells and in the upper part of the filaments.

The protein resides in the cell membrane. Mediates both low-affinity uptake and efflux of sugar across the plasma membrane. Promotes the formation of phloem bundles in mid-veins. Probably involved in the development of stomium cells that control anther opening time. Required for pollen viability. In Petunia hybrida (Petunia), this protein is Bidirectional sugar transporter NEC1 (NEC1).